A 237-amino-acid chain; its full sequence is Cobalt-precorrin-2 C(20)-methyltransferase (237 aa).

Belongs to the precorrin methyltransferase family. In terms of assembly, homodimer.

It catalyses the reaction Co-precorrin-2 + S-adenosyl-L-methionine = Co-precorrin-3 + S-adenosyl-L-homocysteine + H(+). The protein operates within cofactor biosynthesis; adenosylcobalamin biosynthesis; cob(II)yrinate a,c-diamide from sirohydrochlorin (anaerobic route): step 2/10. Functionally, methylates cobalt-precorrin-2 at the C-20 position to produce cobalt-precorrin-3A in the anaerobic cobalamin biosynthesis pathway. This Salmonella typhimurium (strain LT2 / SGSC1412 / ATCC 700720) protein is Cobalt-precorrin-2 C(20)-methyltransferase (cbiL).